The primary structure comprises 566 residues: Probable cytochrome P450 519D1 (566 aa).

Residues methionine 1 to lysine 21 form a helical membrane-spanning segment. The disordered stretch occupies residues phenylalanine 471–lysine 491. The segment covering asparagine 472–asparagine 487 has biased composition (low complexity). Residue cysteine 510 coordinates heme.

This sequence belongs to the cytochrome P450 family. Heme is required as a cofactor.

Its subcellular location is the membrane. The polypeptide is Probable cytochrome P450 519D1 (cyp519D1) (Dictyostelium discoideum (Social amoeba)).